Reading from the N-terminus, the 516-residue chain is GMP synthase [glutamine-hydrolyzing] (516 aa).

One can recognise a Glutamine amidotransferase type-1 domain in the interval 8-198; that stretch reads KILILDFGSQ…VVNICGCDTL (191 aa). Cysteine 84 acts as the Nucleophile in catalysis. Residues histidine 172 and glutamate 174 contribute to the active site. Positions 199–391 constitute a GMPS ATP-PPase domain; it reads WNIENIIEND…LGLPYNMLYR (193 aa). Residue 226-232 participates in ATP binding; the sequence is SGGVDSS.

As to quaternary structure, homodimer.

The catalysed reaction is XMP + L-glutamine + ATP + H2O = GMP + L-glutamate + AMP + diphosphate + 2 H(+). The protein operates within purine metabolism; GMP biosynthesis; GMP from XMP (L-Gln route): step 1/1. Functionally, catalyzes the synthesis of GMP from XMP. The sequence is that of GMP synthase [glutamine-hydrolyzing] from Francisella tularensis subsp. holarctica (strain FTNF002-00 / FTA).